The primary structure comprises 738 residues: MGTSVQVTPLSGAYGEGPLCYLLAVDGFRFLLDCGWTDLCDPSHLQPLAKVAPTIDAVLLSHADTMHLGALPYAMKHLGLSAPVYATEPVFRLGILTLYDYFISRRQVSDFDLFTLDDIDAAFQNVVRLKYSQNHLLNDKGEGIVIAPHVAGHDLGGTVWKITKDGEDVVYAVDFNHRKERHLNGTALGSFVRPAVLITDAYNALNNHVYKRQQDQDFIDALVKVLTGGGSVLLPIDTAGRVLEILLILEQYWAQRHLIYPIYFLTNVSTSTVDYVKSFLEWMNDSISKSFEHTRDNAFLLKCVTQIINKDELEKLGDAPKVVLASMASLEVGFSHDIFVDMANEAKNLVLFTEKGQFGTLARMLQVDPPPKAVKVTMSKRIPLVGDELKAYEEEQERIKKEEALKASLNKEEEKKASLGSNAKASDPMVIDASTSRKPSNAGSKFGGNVDILIDGFVPPSSSVAPMFPFFENTSEWDDFGEVINPEDYLMKQEEMDNTLMPGAGDGMDSMLDEGSARLLLDSTPSKVISNEMTVQVKCSLAYMDFEGRSDGRSVKSVIAHVAPLKLVLVHGSAEATEHLKMHCSKNSDLHVYAPQIEETIDVTSDLCAYKVQLSEKLMSNVISKKLGEHEIAWVDAEVGKTDDKLTLLPPSSTPAAHKSVLVGDLKLADFKQFLANKGLQVEFAGGALRCGEYITLRKIGDAGQKGSTGSQQIVIEGPLCEDYYKIRELLYSQFYLL.

The protein belongs to the metallo-beta-lactamase superfamily. RNA-metabolizing metallo-beta-lactamase-like family. CPSF2/YSH1 subfamily. In terms of assembly, CPSF is a heterotetramer composed of four distinct subunits 160, 100, 70 and 30 kDa.

It localises to the nucleus. CPSF plays a key role in pre-mRNA 3'-end formation, recognizing the AAUAAA signal sequence and interacting with poly(A)polymerase and other factors to bring about cleavage and poly(A) addition. The protein is Cleavage and polyadenylation specificity factor subunit 2 of Oryza sativa subsp. japonica (Rice).